A 458-amino-acid polypeptide reads, in one-letter code: Retinoic acid receptor alpha-B (458 aa).

Residues 1 to 79 (MYESVDVVGL…PPSPPPPPRV (79 aa)) form a modulating region. Positions 48 to 75 (HWSGSNHSVETQSTSSEEIVPSPPSPPP) are disordered. Residues 49–64 (WSGSNHSVETQSTSSE) are compositionally biased toward polar residues. Positions 80–155 (YKPCFVCQDK…VGMSKESVRN (76 aa)) form a DNA-binding region, nuclear receptor. 2 NR C4-type zinc fingers span residues 83 to 103 (CFVC…CEGC) and 119 to 138 (CHRE…CQYC). Residues 156-177 (DRNKRKKDDKKQECLENYVLSP) are hinge. Residues 178–412 (DTEKMIEQVR…PLIQEMLENS (235 aa)) enclose the NR LBD domain. The short motif at 403–411 (PLIQEMLEN) is the 9aaTAD element. A disordered region spans residues 411-458 (NSEGLEGGGSKGAGGGGGGGGGKGAPPGSCSPSLSPSSAHSSPSAHSP). Positions 415–435 (LEGGGSKGAGGGGGGGGGKGA) are enriched in gly residues. Positions 436–458 (PPGSCSPSLSPSSAHSSPSAHSP) are enriched in low complexity.

This sequence belongs to the nuclear hormone receptor family. NR1 subfamily. Heterodimer; with an rxr molecule. Binds DNA preferentially as a rar/rxr heterodimer. In the embryo, zygotic expression largely overlaps that of raraa, with high levels in hindbrain, lateral plate mesoderm (LPM) and tail bud, but in later stages rarab is expressed more broadly in the brain, pectoral fin bud and pharyngeal arches.

It localises to the nucleus. Functionally, receptor for retinoic acid. Retinoic acid receptors bind as heterodimers to their target response elements in response to their ligands, all-trans or 9-cis retinoic acid, and regulate gene expression in various biological processes. The rar/rxr heterodimers bind to the retinoic acid response elements (RARE) composed of tandem 5'-AGGTCA-3' sites known as DR1-DR5. Required for hindbrain development and, in lateral plate mesoderm, for specification of the pectoral fins. The sequence is that of Retinoic acid receptor alpha-B from Danio rerio (Zebrafish).